Consider the following 252-residue polypeptide: Aquaporin TIP4-4 (252 aa).

Helical transmembrane passes span 20 to 40 (AVLA…GSAM) and 53 to 73 (VVGL…MVSA). Residues 83–85 (NPA) carry the NPA 1 motif. The next 3 membrane-spanning stretches (helical) occupy residues 105-125 (VAAQ…LAVA), 143-163 (GVLM…ATVV), and 168-188 (AVGG…VLAG). An NPA 2 motif is present at residues 197–199 (NPA). Residues 216–236 (VYWVGPLIGGPLAGLVYDGLF) form a helical membrane-spanning segment.

Belongs to the MIP/aquaporin (TC 1.A.8) family. TIP (TC 1.A.8.10) subfamily.

Its subcellular location is the vacuole membrane. Aquaporins facilitate the transport of water and small neutral solutes across cell membranes. This chain is Aquaporin TIP4-4 (TIP4-4), found in Zea mays (Maize).